The primary structure comprises 72 residues: Heat shock factor-binding protein 1-like protein 1 (72 aa).

Positions 12–66 (DLLQNAAENLLQEVEEHFQALTATLNLRMEEMGNRIEDLQRNVDDLMAQAGIENS) form a coiled coil.

This sequence belongs to the HSBP1 family.

The chain is Heat shock factor-binding protein 1-like protein 1 (Hsbp1l1) from Rattus norvegicus (Rat).